The chain runs to 1033 residues: SIT4-associating protein SAP190 (1033 aa).

Disordered regions lie at residues 32-82 (DQDD…TTES), 147-213 (PEII…QVET), 768-813 (FGND…HDSG), and 828-1033 (ENEE…KEAF). A compositionally biased stretch (basic and acidic residues) spans 158 to 170 (ILIERDRKDKKED). Residues 171–182 (AEEGGDSEETTN) show a composition bias toward acidic residues. Residues 183-195 (DSDHDSGDERSVD) are compositionally biased toward basic and acidic residues. The residue at position 774 (serine 774) is a Phosphoserine. Acidic residues-rich tracts occupy residues 784–793 (SEDIIGDTEG) and 828–838 (ENEEDYAEYSD). Phosphoserine is present on residues serine 857, serine 862, and serine 892. Over residues 858–879 (DDGKSKSAESEFTDKISEHRDG) the composition is skewed to basic and acidic residues. A compositionally biased stretch (polar residues) spans 909–924 (SRSQPSDPKLQDQNIF). Residues 932-944 (GVGDDDDYMDPND) are compositionally biased toward acidic residues. Position 990 is a phosphothreonine (threonine 990). Serine 991 carries the post-translational modification Phosphoserine. The span at 1000–1018 (ISSDEEDSEDEDEENDMGN) shows a compositional bias: acidic residues.

The protein belongs to the SAPS family. Associates with the SIT4 protein phosphatase catalytic subunit in a cell-cycle-dependent manner. Hyperphosphorylated in the absence of SIT4.

It localises to the cytoplasm. In terms of biological role, positive regulator of protein phosphatase SIT4. Involved in the general amino acid control (GAAC) response regulated by TOR. Involved in the dephosphorylation of the elongator complex subunit IKI3. The chain is SIT4-associating protein SAP190 (SAP190) from Saccharomyces cerevisiae (strain Lalvin EC1118 / Prise de mousse) (Baker's yeast).